A 534-amino-acid chain; its full sequence is Glutamyl-tRNA(Gln) amidotransferase subunit B, mitochondrial (534 aa).

Residues 1 to 28 constitute a mitochondrion transit peptide; it reads MTVLCRLRHCHLSTPTLCRRFHDARVYK.

The protein belongs to the GatB/GatE family. GatB subfamily. As to quaternary structure, subunit of the heterotrimeric GatCAB amidotransferase (AdT) complex, composed of A, B and C subunits.

The protein localises to the mitochondrion. It catalyses the reaction L-glutamyl-tRNA(Gln) + L-glutamine + ATP + H2O = L-glutaminyl-tRNA(Gln) + L-glutamate + ADP + phosphate + H(+). In terms of biological role, allows the formation of correctly charged Gln-tRNA(Gln) through the transamidation of misacylated Glu-tRNA(Gln) in the mitochondria. The reaction takes place in the presence of glutamine and ATP through an activated gamma-phospho-Glu-tRNA(Gln). In Laccaria bicolor (strain S238N-H82 / ATCC MYA-4686) (Bicoloured deceiver), this protein is Glutamyl-tRNA(Gln) amidotransferase subunit B, mitochondrial.